The sequence spans 191 residues: Methylated-DNA--protein-cysteine methyltransferase (191 aa).

Positions 120 and 134 each coordinate DNA. Cysteine 151 (nucleophile; methyl group acceptor) is an active-site residue.

It belongs to the MGMT family.

The protein resides in the nucleus. The enzyme catalyses a 6-O-methyl-2'-deoxyguanosine in DNA + L-cysteinyl-[protein] = S-methyl-L-cysteinyl-[protein] + a 2'-deoxyguanosine in DNA. It carries out the reaction a 4-O-methyl-thymidine in DNA + L-cysteinyl-[protein] = a thymidine in DNA + S-methyl-L-cysteinyl-[protein]. Involved in the cellular defense against the biological effects of O6-methylguanine (O6-MeG) and O4-methylthymine (O4-MeT) in DNA. Repairs the methylated nucleobase in DNA by stoichiometrically transferring the methyl group to a cysteine residue in the enzyme. This is a suicide reaction: the enzyme is irreversibly inactivated. The polypeptide is Methylated-DNA--protein-cysteine methyltransferase (MGT1) (Debaryomyces hansenii (strain ATCC 36239 / CBS 767 / BCRC 21394 / JCM 1990 / NBRC 0083 / IGC 2968) (Yeast)).